The following is a 208-amino-acid chain: Molybdenum cofactor guanylyltransferase (208 aa).

GTP is bound by residues 10–12 (LAG), Lys-23, Asp-69, and Asp-103. Asp-103 contacts Mg(2+).

Belongs to the MobA family. In terms of assembly, monomer. Mg(2+) is required as a cofactor.

The protein resides in the cytoplasm. The catalysed reaction is Mo-molybdopterin + GTP + H(+) = Mo-molybdopterin guanine dinucleotide + diphosphate. Transfers a GMP moiety from GTP to Mo-molybdopterin (Mo-MPT) cofactor (Moco or molybdenum cofactor) to form Mo-molybdopterin guanine dinucleotide (Mo-MGD) cofactor. The chain is Molybdenum cofactor guanylyltransferase from Mesorhizobium japonicum (strain LMG 29417 / CECT 9101 / MAFF 303099) (Mesorhizobium loti (strain MAFF 303099)).